A 155-amino-acid chain; its full sequence is Desiccation-related protein clone PCC6-19 (155 aa).

Residues 1 to 155 (MAQFGGEKYG…IKEKLPGGQH (155 aa)) form a disordered region. 2 stretches are compositionally biased toward gly residues: residues 27 to 39 (AHRGGGIMGGGQQ) and 47 to 76 (GVLGHGTAGQHGTTGGGLGHGTAGTGGALG). The span at 83 to 92 (GSSSSSSSSE) shows a compositional bias: low complexity. A compositionally biased stretch (polar residues) spans 118-135 (TTTDQQQYGTAATHGQAQ). Over residues 136–155 (QHEKKGIMDKIKEKLPGGQH) the composition is skewed to basic and acidic residues.

This sequence belongs to the plant dehydrin family.

The chain is Desiccation-related protein clone PCC6-19 from Craterostigma plantagineum (Blue gem).